A 40-amino-acid chain; its full sequence is Photosystem II reaction center protein X (40 aa).

The helical transmembrane segment at 10–30 threads the bilayer; the sequence is WSLVWGTVIVVIPVTVGLVFI.

Belongs to the PsbX family. Type 1 subfamily. In terms of assembly, PSII is composed of 1 copy each of membrane proteins PsbA, PsbB, PsbC, PsbD, PsbE, PsbF, PsbH, PsbI, PsbJ, PsbK, PsbL, PsbM, PsbT, PsbX, PsbY, PsbZ, Psb30/Ycf12, peripheral proteins PsbO, CyanoQ (PsbQ), PsbU, PsbV and a large number of cofactors. It forms dimeric complexes.

The protein localises to the cellular thylakoid membrane. Functionally, involved in the binding and/or turnover of quinones at the Q(B) site of photosystem II (PSII). PSII is a light-driven water plastoquinone oxidoreductase, using light energy to abstract electrons from H(2)O, generating a proton gradient subsequently used for ATP formation. The polypeptide is Photosystem II reaction center protein X (Crocosphaera subtropica (strain ATCC 51142 / BH68) (Cyanothece sp. (strain ATCC 51142))).